The sequence spans 347 residues: MKNTYRASNISGFNWWGTVIGFILSTSNRFYIGWFGIFMFPLTGLAIIAYVAAFILAPPVDIDGIREPVAGSLLYGNNIISGAVIPSSNAIGVHFYPEWESATLLEWLYNGGTYQFVVLHFIGGVSSWMGREWEFSFRLGMRPWIYLAFSAPLVAATAVFVFYPIGQGSFSDGMPLGVSGTFNFMLVFQAEHNILMHPFHILGVAGVFGGSLFSAMHGSLVTSSLLAETSGDVSLNVGYNFGQEDETYSISAAHGYFGRLIFQYASFNNSRSLHFFLAAWPVIGIWFTALGVSTMAFNLNGLNFNQSIIDSNGHLINSWADLVNRANLGIEVMHERNTHHYPLDLGL.

3 helical membrane passes run 31 to 48, 120 to 135, and 144 to 158; these read YIGWFGIFMFPLTGLAII, HFIGGVSSWMGREWEF, and WIYLAFSAPLVAATA. A chlorophyll a-binding site is contributed by His-120. Pheophytin a is bound at residue Trp-128. Residues Asp-172 and Glu-191 each contribute to the [CaMn4O5] cluster site. A helical transmembrane segment spans residues 199-220; the sequence is FHILGVAGVFGGSLFSAMHGSL. Position 200 (His-200) interacts with chlorophyll a. A quinone-binding positions include His-217 and 266 to 267; that span reads SF. His-217 is a binding site for Fe cation. Fe cation is bound at residue His-274. Residues 276–290 traverse the membrane as a helical segment; the sequence is FLAAWPVIGIWFTAL. Positions 334, 335, and 344 each coordinate [CaMn4O5] cluster.

The protein belongs to the reaction center PufL/M/PsbA/D family. In terms of assembly, PSII is composed of 1 copy each of membrane proteins PsbA, PsbB, PsbC, PsbD, PsbE, PsbF, PsbH, PsbI, PsbJ, PsbK, PsbL, PsbM, PsbT, PsbX, PsbY, PsbZ, Psb30/Ycf12, at least 3 peripheral proteins of the oxygen-evolving complex and a large number of cofactors. It forms dimeric complexes. Requires The D1/D2 heterodimer binds P680, chlorophylls that are the primary electron donor of PSII, and subsequent electron acceptors. It shares a non-heme iron and each subunit binds pheophytin, quinone, additional chlorophylls, carotenoids and lipids. D1 provides most of the ligands for the Mn4-Ca-O5 cluster of the oxygen-evolving complex (OEC). There is also a Cl(-1) ion associated with D1 and D2, which is required for oxygen evolution. The PSII complex binds additional chlorophylls, carotenoids and specific lipids. as cofactor. Tyr-163 forms a radical intermediate that is referred to as redox-active TyrZ, YZ or Y-Z.

The protein resides in the plastid. The protein localises to the chloroplast thylakoid membrane. It catalyses the reaction 2 a plastoquinone + 4 hnu + 2 H2O = 2 a plastoquinol + O2. Photosystem II (PSII) is a light-driven water:plastoquinone oxidoreductase that uses light energy to abstract electrons from H(2)O, generating O(2) and a proton gradient subsequently used for ATP formation. It consists of a core antenna complex that captures photons, and an electron transfer chain that converts photonic excitation into a charge separation. The D1/D2 (PsbA/PsbD) reaction center heterodimer binds P680, the primary electron donor of PSII as well as several subsequent electron acceptors. The protein is Photosystem II protein D1 of Alexandrium tamarense (Red tide dinoflagellate).